A 724-amino-acid chain; its full sequence is Aquaglyceroporin-4 (724 aa).

Disordered regions lie at residues 1-167 (MADE…SIRR), 248-267 (INMA…NQAD), and 302-396 (AHGL…DLDG). At 1–434 (MADEEIKPTS…VIRLRFREPL (434 aa)) the chain is on the cytoplasmic side. A compositionally biased stretch (polar residues) spans 87 to 96 (LTGQVPQDND). Over residues 252-265 (QQQQQQQQQQPQNQ) the composition is skewed to low complexity. Polar residues-rich tracts occupy residues 307-325 (SPTN…TAPS) and 360-370 (PSQTSQNSQNE). The chain crosses the membrane as a helical span at residues 435-455 (AELLAVTCQLTLGFCADLVVV). Topologically, residues 456–472 (TSGKNASPAGNEATTDW) are extracellular. A helical membrane pass occupies residues 473 to 493 (AWGLASMLGIYIAGGISGAHL). The short motif at 494–496 (NPA) is the NPA 1 element. The Cytoplasmic segment spans residues 494–513 (NPAISIMLWIYRGFPLRKVP). Residues 514-534 (MYVLAQILGAFIAALISFGLY) traverse the membrane as a helical segment. The Extracellular portion of the chain corresponds to 535-567 (QTNIVEYGGTDLKTSDTMGAFITYPRYPWINAS). N-linked (GlcNAc...) asparagine glycosylation is present at Asn565. The chain crosses the membrane as a helical span at residues 568 to 588 (TSFFTEFVGTAILAVAVLALG). Over 589 to 595 (DDMNAPP) the chain is Cytoplasmic. Residues 596–616 (GAGMSAFILGLVITVLSMAFG) form a helical membrane-spanning segment. The Extracellular segment spans residues 617–647 (YNTGAALNPSRDLGPRLALAALGYGKDLFTD). Positions 624–626 (NPS) match the NPA 2 motif. A helical membrane pass occupies residues 648 to 668 (VYWIWGNWCAPILGAIFGAFL). Residues 669 to 724 (YDAAIFAGGESPVNYPRKRIKRAGHKWRKKWGVRLRKMKPAKKGEDEAYRRWKESQ) lie on the Cytoplasmic side of the membrane.

Belongs to the MIP/aquaporin (TC 1.A.8) family.

Its subcellular location is the membrane. It catalyses the reaction H2O(in) = H2O(out). The catalysed reaction is glycerol(in) = glycerol(out). Water channel required to facilitate the transport of water across membranes. May play a role in the vegetative growth. The chain is Aquaglyceroporin-4 from Botryotinia fuckeliana (strain B05.10) (Noble rot fungus).